A 630-amino-acid polypeptide reads, in one-letter code: 1,4-alpha-glucan branching enzyme GlgB (630 aa).

Catalysis depends on Asp-308, which acts as the Nucleophile. The active-site Proton donor is Glu-361.

It belongs to the glycosyl hydrolase 13 family. GlgB subfamily. As to quaternary structure, monomer.

The enzyme catalyses Transfers a segment of a (1-&gt;4)-alpha-D-glucan chain to a primary hydroxy group in a similar glucan chain.. Its pathway is glycan biosynthesis; glycogen biosynthesis. Its function is as follows. Catalyzes the formation of the alpha-1,6-glucosidic linkages in glycogen by scission of a 1,4-alpha-linked oligosaccharide from growing alpha-1,4-glucan chains and the subsequent attachment of the oligosaccharide to the alpha-1,6 position. This is 1,4-alpha-glucan branching enzyme GlgB from Halothermothrix orenii (strain H 168 / OCM 544 / DSM 9562).